The primary structure comprises 901 residues: Quinate repressor protein (901 aa).

The tract at residues 1-88 is sufficient for repression; it reads MSILVRPPKR…DSLQTRRKFP (88 aa). Disordered stretches follow at residues 26-59 and 878-901; these read LRDF…DGSR and EEQG…GQPM. Residues 31–43 show a composition bias toward polar residues; sequence QGNSASTPINTSA.

The protein in the N-terminal section; belongs to the shikimate kinase family. This sequence in the 2nd section; belongs to the type-I 3-dehydroquinase family. It in the C-terminal section; belongs to the shikimate dehydrogenase family. As to quaternary structure, interacts with qutA; transcriptional activator of the quinate utilization pathway genes.

Functionally, multi-domain repressor protein that negatively regulates transcription of the quinate utilization pathway genes. May mediate its repressor activity by binding directly to the qutA activator protein. This is Quinate repressor protein (qutR) from Emericella nidulans (strain FGSC A4 / ATCC 38163 / CBS 112.46 / NRRL 194 / M139) (Aspergillus nidulans).